We begin with the raw amino-acid sequence, 145 residues long: Probable low molecular weight protein-tyrosine-phosphatase EpsP (145 aa).

Cys-9 acts as the Nucleophile in catalysis. Arg-15 is an active-site residue. The active-site Proton donor is the Asp-114.

It belongs to the low molecular weight phosphotyrosine protein phosphatase family.

The catalysed reaction is O-phospho-L-tyrosyl-[protein] + H2O = L-tyrosyl-[protein] + phosphate. Its pathway is glycan metabolism; exopolysaccharide biosynthesis. Functionally, may be involved in assembly or function of the EPS I polymerization/export complex and/or the EpsB ATPase. Alternatively it may function in the removal of the terminal phosphate from C55-isoprenyl pyrophosphate in order to recycle the C55-isoprenyl phosphate lipid carrier used in the synthesis of polysaccharide repeat units. The polypeptide is Probable low molecular weight protein-tyrosine-phosphatase EpsP (epsP) (Ralstonia nicotianae (strain ATCC BAA-1114 / GMI1000) (Ralstonia solanacearum)).